A 500-amino-acid chain; its full sequence is Probable cytosol aminopeptidase (500 aa).

2 residues coordinate Mn(2+): lysine 268 and aspartate 273. The active site involves lysine 280. Residues aspartate 291, aspartate 350, and glutamate 352 each coordinate Mn(2+). Residue arginine 354 is part of the active site.

The protein belongs to the peptidase M17 family. Mn(2+) serves as cofactor.

The protein localises to the cytoplasm. It carries out the reaction Release of an N-terminal amino acid, Xaa-|-Yaa-, in which Xaa is preferably Leu, but may be other amino acids including Pro although not Arg or Lys, and Yaa may be Pro. Amino acid amides and methyl esters are also readily hydrolyzed, but rates on arylamides are exceedingly low.. It catalyses the reaction Release of an N-terminal amino acid, preferentially leucine, but not glutamic or aspartic acids.. Its function is as follows. Presumably involved in the processing and regular turnover of intracellular proteins. Catalyzes the removal of unsubstituted N-terminal amino acids from various peptides. The polypeptide is Probable cytosol aminopeptidase (Alkaliphilus metalliredigens (strain QYMF)).